The primary structure comprises 318 residues: Nucleotide-binding protein Lcho_3490 (318 aa).

Residue 35-42 (GISGGGKS) participates in ATP binding. 84–87 (DVRN) is a GTP binding site.

The protein belongs to the RapZ-like family.

Functionally, displays ATPase and GTPase activities. This is Nucleotide-binding protein Lcho_3490 from Leptothrix cholodnii (strain ATCC 51168 / LMG 8142 / SP-6) (Leptothrix discophora (strain SP-6)).